We begin with the raw amino-acid sequence, 240 residues long: Keratinocyte-associated protein 3 (240 aa).

A run of 4 helical transmembrane segments spans residues valine 21 to glycine 41, valine 63 to serine 83, leucine 95 to leucine 115, and alanine 163 to tyrosine 183.

Belongs to the TMEM54 family.

It localises to the membrane. The polypeptide is Keratinocyte-associated protein 3 (Krtcap3) (Mus musculus (Mouse)).